A 334-amino-acid chain; its full sequence is D-alanine--D-alanine ligase (334 aa).

The ATP-grasp domain occupies 124 to 329 (KMWFSALGIP…FAQYLSGNIL (206 aa)). 154 to 209 (ALAKWGSIFIKAASQGSSVGCYRVDSIEQLASSLEEAFTFSPYVVIEKTITARELE) lines the ATP pocket. The Mg(2+) site is built by Asp283, Glu296, and Asn298.

Belongs to the D-alanine--D-alanine ligase family. Mg(2+) is required as a cofactor. Requires Mn(2+) as cofactor.

It localises to the cytoplasm. It carries out the reaction 2 D-alanine + ATP = D-alanyl-D-alanine + ADP + phosphate + H(+). It participates in cell wall biogenesis; peptidoglycan biosynthesis. In terms of biological role, cell wall formation. This Shewanella pealeana (strain ATCC 700345 / ANG-SQ1) protein is D-alanine--D-alanine ligase.